The chain runs to 1390 residues: MSYSFTEKKRLRKSFAKRESVQEVPYLLAMQLESYAAFLQADTPADKRTDTGLQAAFSSVFPIVSHSGNARLDFVSYNLGQEPFDVKECQQRGLTYAAPLRVKVRLTIMDKEASKPTVKEVKEQEVYMGELPLMTENGSFVINGTERVIVSQLHRSPGVFFEHDRGKTHSSGKLLFSARIIPYRGSWLDFEFDPKDYLYFRVDRRRKMPVTILLKALGFTPEQILETFYDFDTFHIAKKGVQFELVPERLRGEVAKFDILDKDGKVIVAKDKRITVKHIRDMEKSGISKITVPEEFLLGRSLAAGIVDKTTGEIIANANDEVTESLLDKLREADVNKINTLYANDLDHGDYISQTLRIDEIPDEYSARVAIYRMMRPGEPPTEEAVQALFEGLFFNEDRYDLSAVGRMKFNRRAFPEKIEERTAAWLRRFYEKVGPQGAEGPGTLSNDDILAVIAVLIELRNGRGEIDDIDHLGNRRIRSVGELAENQFRAGLVRVERAVKERLSQAESDNLMPHDLINAKPVSSAIREFFGSSQPSQFMDQTNPLSEITHKRRVSALGPGGLTRERAGFEVRDVHSTHYGRVCPIETPEGPNIGLINSLALYSRTNQYGFLETPYRRVADNKVSDQIDYLSAIEESQYMIAQANSELDQDGRFKEDLVSARYHNEFTMAQPDRVQYMDVAPGQIVSVAASLIPFLEHDDANRALMGANMQRQAVPCLRAEKALVGTGIERTVAVDSGTVVTARRGGVVDYVDSSRIVVRVHDEEAAAGEVGVDIYNLIKYTRSNQNTNINQRPLVNVGDVLARGDVIADGASTDMGELALGQNMLVAFMPWNGYNFEDSILISERVVADDRYTSIHIEELSVVARDTKLGAEEITRDISNLSERMLGRLDESGIIYIGAEVEAGDVLVGKVTPKGETQLTPEEKLLRAIFGEKASDVKDTSLRVPSGMSGTVIDVQVFTREGIERDARAQQIIDDQLADYKQDLADQMRIVEDDAFGRIRRLIEGKVATGGPQKLKKGETVTAEYLDGLARYDWFDIRLSDEDVARQLEQLRDSLSQARIEFDSKFEEKKRKLTQGDELPPGVQKMVKVYLAVKRRIQPGDKMAGRHGNKGVVSKIVPIEDMPHMADGTPMDIVLNPLGVPSRMNIGQILEVHLGWAAKGLGIRIGNMLQAQAKAAELRDFLEQVYNKSNGKSEDIASLSDDEVIDLAKNLRSGVPFATPVFDGATEADIKAMLDLAFPDDDPRTQQLQFASGKTQVTLFDGRTGDAFERPVTVGYMHVLKLHHLVDDKMHARSTGPYSLVTQQPLGGKAQFGGQRFGEMEVWALEAYGASYTLQEMLTVKSDDVTGRTKVYENIVKGEHKIDAGMPESFNVLVKEIRSLAIDIDLDRN.

This sequence belongs to the RNA polymerase beta chain family. In terms of assembly, the RNAP catalytic core consists of 2 alpha, 1 beta, 1 beta' and 1 omega subunit. When a sigma factor is associated with the core the holoenzyme is formed, which can initiate transcription.

It carries out the reaction RNA(n) + a ribonucleoside 5'-triphosphate = RNA(n+1) + diphosphate. DNA-dependent RNA polymerase catalyzes the transcription of DNA into RNA using the four ribonucleoside triphosphates as substrates. The chain is DNA-directed RNA polymerase subunit beta from Methylobacillus flagellatus (strain ATCC 51484 / DSM 6875 / VKM B-1610 / KT).